Reading from the N-terminus, the 99-residue chain is Transmembrane protein 14A (99 aa).

Helical transmembrane passes span 1-21 (MDLI…LGYK), 24-44 (GGVP…YGAY), and 79-99 (PAGL…LLLL).

It belongs to the TMEM14 family.

It is found in the mitochondrion membrane. It localises to the endoplasmic reticulum membrane. Inhibits apoptosis via negative regulation of the mitochondrial outer membrane permeabilization involved in apoptotic signaling pathway. The polypeptide is Transmembrane protein 14A (TMEM14A) (Sus scrofa (Pig)).